Here is a 201-residue protein sequence, read N- to C-terminus: MTDPVTLDGEGQIGEFDEKRAENAVRELLIAVGEDPDREGLRETPARVARAYREIFAGLWQEPEDVLTTTFDLGHDEMVLVKDIEVFSTCEHHLVPFRGVAHVGYIPSTSGKITGLSKLARLVDVYARRPQVQERLTTQIADSLMEILEPRGVIVVVECEHMCMSMRGIRKPGAKTLTSAVRGQLRDVATRNEAMSLIMAR.

Zn(2+) is bound by residues Cys90, His93, and Cys163.

The protein belongs to the GTP cyclohydrolase I family. Toroid-shaped homodecamer, composed of two pentamers of five dimers.

It catalyses the reaction GTP + H2O = 7,8-dihydroneopterin 3'-triphosphate + formate + H(+). The protein operates within cofactor biosynthesis; 7,8-dihydroneopterin triphosphate biosynthesis; 7,8-dihydroneopterin triphosphate from GTP: step 1/1. The protein is GTP cyclohydrolase 1 (folE) of Streptomyces coelicolor (strain ATCC BAA-471 / A3(2) / M145).